The following is a 333-amino-acid chain: Prenyltransferase stbC (333 aa).

A run of 8 helical transmembrane segments spans residues Val-74 to Ala-94, Ala-125 to Ala-145, Cys-147 to Cys-164, Val-173 to Pro-193, Val-201 to Tyr-221, Ile-247 to Val-267, Tyr-272 to Ile-292, and Ser-304 to Leu-324.

The protein belongs to the UbiA prenyltransferase family.

It localises to the membrane. It carries out the reaction orsellinate + (2E,6E)-farnesyl diphosphate = ilicicolinate B + diphosphate. The protein operates within secondary metabolite biosynthesis; terpenoid biosynthesis. Functionally, prenyltransferase; part of the cluster that mediates the biosynthesis of LL-Z1272-beta, also known as ilicicolin B, a prenylated aryl-aldehyde produced by several fungi and that serves as a key pathway intermediate for many fungal meroterpenoids. The first step in the pathway is performed by the non-reducing polyketide synthase stbA that produces orsellinic acid by condensing acetyl-CoA with 3 malonyl-CoA units. The prenyltransferase stbC then prenylates orsenilic acid into grifolic acid. Finally, grifolic acid is reduced to ilicicolin B by the NRPS-like protein stbB. The protein is Prenyltransferase stbC of Stachybotrys bisbyi (Hyalostachybotrys bisbyi).